Consider the following 697-residue polypeptide: Elongation factor G (697 aa).

The 276-residue stretch at 10 to 285 (ERTRNIGIMA…AVVDYLPSPL (276 aa)) folds into the tr-type G domain. Residues 19–26 (AHIDAGKT), 83–87 (DTPGH), and 137–140 (NKMD) contribute to the GTP site.

Belongs to the TRAFAC class translation factor GTPase superfamily. Classic translation factor GTPase family. EF-G/EF-2 subfamily.

It localises to the cytoplasm. Functionally, catalyzes the GTP-dependent ribosomal translocation step during translation elongation. During this step, the ribosome changes from the pre-translocational (PRE) to the post-translocational (POST) state as the newly formed A-site-bound peptidyl-tRNA and P-site-bound deacylated tRNA move to the P and E sites, respectively. Catalyzes the coordinated movement of the two tRNA molecules, the mRNA and conformational changes in the ribosome. The chain is Elongation factor G from Pediococcus pentosaceus (strain ATCC 25745 / CCUG 21536 / LMG 10740 / 183-1w).